A 641-amino-acid polypeptide reads, in one-letter code: DNA mismatch repair protein MutL (641 aa).

Residues 345 to 445 (PAAVAPPAPA…GDTSLGDTSP (101 aa)) are disordered. The span at 419–429 (PRTEPATRTGE) shows a compositional bias: basic and acidic residues. A compositionally biased stretch (polar residues) spans 432-442 (GISSGDTSLGD).

Belongs to the DNA mismatch repair MutL/HexB family.

Functionally, this protein is involved in the repair of mismatches in DNA. It is required for dam-dependent methyl-directed DNA mismatch repair. May act as a 'molecular matchmaker', a protein that promotes the formation of a stable complex between two or more DNA-binding proteins in an ATP-dependent manner without itself being part of a final effector complex. The sequence is that of DNA mismatch repair protein MutL from Azotobacter vinelandii (strain DJ / ATCC BAA-1303).